A 352-amino-acid chain; its full sequence is Elongation factor Ts (352 aa).

Residues 81 to 84 (TDFV) are involved in Mg(2+) ion dislocation from EF-Tu.

Belongs to the EF-Ts family.

The protein resides in the cytoplasm. Functionally, associates with the EF-Tu.GDP complex and induces the exchange of GDP to GTP. It remains bound to the aminoacyl-tRNA.EF-Tu.GTP complex up to the GTP hydrolysis stage on the ribosome. The chain is Elongation factor Ts from Campylobacter hominis (strain ATCC BAA-381 / DSM 21671 / CCUG 45161 / LMG 19568 / NCTC 13146 / CH001A).